The chain runs to 577 residues: Jasmonoyl--L-amino acid synthetase JAR4 (577 aa).

Ser-99 is an ATP binding site. Ser-102 provides a ligand contact to jasmonate. ATP-binding positions include Met-119, Thr-122, Gly-163, Asn-168, and 331 to 336 (GSSEGW). An L-alpha-amino acid is bound at residue 166–170 (TTNVY). Residue 328–331 (ADYG) coordinates jasmonate. Position 531-535 (531-535 (KILDH)) interacts with an L-alpha-amino acid.

It belongs to the IAA-amido conjugating enzyme family.

It carries out the reaction a jasmonate + an L-alpha-amino acid + ATP = a jasmonyl-L-amino acid + AMP + diphosphate + H(+). Catalyzes the synthesis of jasmonate-amino acid conjugates by adenylation. Catalyzes the conjugation of jasmonate (JA) to Ile, Leu and Val. Catalyzes the conjugation of jasmonate (JA) to Ile to mediate defense signaling and resistance to the herbivore Manduca sexta caterpillars. The protein is Jasmonoyl--L-amino acid synthetase JAR4 of Nicotiana attenuata (Coyote tobacco).